A 360-amino-acid polypeptide reads, in one-letter code: MSQNVISQPVEAQQSFARAVTESLPGLLLVCAVALVASFVAPKLEAYPLFKTYLSLKDFILAIIFGIIIRNTVGVPAVFQPGLRYSTIMTKTGIVIMGSSYSLAGLVSVGAQALVFIAVFLFGTALVMMWLCRKVGMSTPLAACLAAGMSVCGVSATIAIAPAVKAKNEDMAYSIAVVLMFGLLALIAFPLIGKVFNLTPEQFGAFAGVGIVNSAQVLAAGFGFSQEAGIVAGIYNIGRVVFLPFVVLMLAIMAAAQEAEQGNEVAKINKWQMIRDKFPLFVLGFLAIVCLNTAGVLTKPEVKMAKHFMEWAFLLGFASIGLTTRLSDLRAAGLNGFLFGFGVAGLKAALALAAVLLFMS.

Helical transmembrane passes span 20–42, 57–79, 100–122, 142–164, 171–193, 203–225, 232–254, 278–297, 310–327, and 337–359; these read VTESLPGLLLVCAVALVASFVAP, KDFILAIIFGIIIRNTVGVPAVF, SYSLAGLVSVGAQALVFIAVFLF, AACLAAGMSVCGVSATIAIAPAV, MAYSIAVVLMFGLLALIAFPLIG, FGAFAGVGIVNSAQVLAAGFGFS, AGIYNIGRVVFLPFVVLMLAIMA, FPLFVLGFLAIVCLNTAGVL, EWAFLLGFASIGLTTRLS, and FLFGFGVAGLKAALALAAVLLFM.

This sequence belongs to the UPF0324 family.

It is found in the cell membrane. This Nitratidesulfovibrio vulgaris (strain ATCC 29579 / DSM 644 / CCUG 34227 / NCIMB 8303 / VKM B-1760 / Hildenborough) (Desulfovibrio vulgaris) protein is UPF0324 membrane protein DVU_0123.